The following is a 193-amino-acid chain: Ion-translocating oxidoreductase complex subunit A (193 aa).

A run of 6 helical transmembrane segments spans residues 5 to 25 (LLLFVGTVLVNNFVLVKFLGL), 39 to 59 (IGMGLATTFVLTLASVCAWMV), 62 to 82 (FILLPLGLIYLRTLAFILVIA), 102 to 122 (LLGIFLPLITTNCAVLGVALL), 134 to 154 (AVYGFSAAAGFSLVMVLFAAI), and 171 to 191 (SIALITAGLMSLAFMGFTGLV).

It belongs to the NqrDE/RnfAE family. As to quaternary structure, the complex is composed of six subunits: RnfA, RnfB, RnfC, RnfD, RnfE and RnfG.

The protein resides in the cell inner membrane. Functionally, part of a membrane-bound complex that couples electron transfer with translocation of ions across the membrane. The sequence is that of Ion-translocating oxidoreductase complex subunit A from Yersinia pestis (strain Pestoides F).